Consider the following 343-residue polypeptide: Lumican (343 aa).

An N-terminal signal peptide occupies residues 1–18; the sequence is MTLNSLPIFLVLISGIFC. Residue Q19 is modified to Pyrrolidone carboxylic acid. Residues Y20 and Y22 each carry the sulfotyrosine modification. An LRRNT domain is found at 31–69; it reads DPFGPSTAVCAPECNCPLSYPTAMYCDNLKLKTIPIVPS. LRR repeat units lie at residues 70–91, 94–117, 120–140, 141–162, 165–186, 190–211, 212–232, and 235–255; these read GIKY…TFDN, DLQW…VFSK, NLKK…PLPK, TLDD…ALEG, NLTV…GAFK, SLLY…LPHS, LLML…YFQG, and TLQY…PGNV. N-linked (GlcNAc...) (keratan sulfate) asparagine glycosylation occurs at N91. N130 carries N-linked (GlcNAc...) (keratan sulfate) asparagine glycosylation. The N-linked (GlcNAc...) (keratan sulfate) asparagine glycan is linked to N165. N-linked (GlcNAc...) (keratan sulfate) asparagine glycosylation occurs at N257. LRR repeat units lie at residues 260–281, 282–301, and 310–330; these read SLVE…SENL, ENFY…SFCK, and KITH…PQEM. A disulfide bond links C300 and C333. N320 is a glycosylation site (N-linked (GlcNAc...) asparagine).

The protein belongs to the small leucine-rich proteoglycan (SLRP) family. SLRP class II subfamily. As to quaternary structure, binds to laminin. Post-translationally, contains keratan sulfate.

It is found in the secreted. The protein localises to the extracellular space. Its subcellular location is the extracellular matrix. The polypeptide is Lumican (LUM) (Coturnix japonica (Japanese quail)).